Consider the following 430-residue polypeptide: Enolase (430 aa).

Gln-163 serves as a coordination point for (2R)-2-phosphoglycerate. Glu-205 acts as the Proton donor in catalysis. 3 residues coordinate Mg(2+): Asp-242, Glu-287, and Asp-314. 4 residues coordinate (2R)-2-phosphoglycerate: Lys-339, Arg-368, Ser-369, and Lys-390. Lys-339 acts as the Proton acceptor in catalysis.

The protein belongs to the enolase family. Mg(2+) is required as a cofactor.

The protein resides in the cytoplasm. Its subcellular location is the secreted. It localises to the cell surface. The catalysed reaction is (2R)-2-phosphoglycerate = phosphoenolpyruvate + H2O. It participates in carbohydrate degradation; glycolysis; pyruvate from D-glyceraldehyde 3-phosphate: step 4/5. In terms of biological role, catalyzes the reversible conversion of 2-phosphoglycerate (2-PG) into phosphoenolpyruvate (PEP). It is essential for the degradation of carbohydrates via glycolysis. In Geobacillus kaustophilus (strain HTA426), this protein is Enolase.